We begin with the raw amino-acid sequence, 1150 residues long: Pesticidal crystal protein Cry9Ea (1150 aa).

The protein belongs to the delta endotoxin family.

Promotes colloidosmotic lysis by binding to the midgut epithelial cells of insects. In Bacillus thuringiensis subsp. aizawai, this protein is Pesticidal crystal protein Cry9Ea (cry9Ea).